A 652-amino-acid chain; its full sequence is Ethylmalonyl-CoA mutase (652 aa).

The 129-residue stretch at 519–647 (PLKFVVGKPG…MDIVGLVDRT (129 aa)) folds into the B12-binding domain. Residue His-532 participates in adenosylcob(III)alamin binding.

The protein belongs to the methylmalonyl-CoA mutase family. As to quaternary structure, homodimer. The cofactor is adenosylcob(III)alamin.

It carries out the reaction (2R)-ethylmalonyl-CoA = (2S)-methylsuccinyl-CoA. In terms of biological role, radical enzyme that catalyzes the transformation of (2R)-ethylmalonyl-CoA to (2S)-methylsuccinyl-CoA. Is involved in the ethylmalonyl-CoA pathway for acetyl-CoA assimilation required for R.sphaeroides growth on acetate as sole carbon source. Is highly specific for its substrate, ethylmalonyl-CoA, and accepts methylmalonyl-CoA only at 0.2% relative activity. The protein is Ethylmalonyl-CoA mutase of Cereibacter sphaeroides (strain ATCC 17023 / DSM 158 / JCM 6121 / CCUG 31486 / LMG 2827 / NBRC 12203 / NCIMB 8253 / ATH 2.4.1.) (Rhodobacter sphaeroides).